Consider the following 205-residue polypeptide: Urease accessory protein UreE (205 aa).

Positions His-171–His-192 are enriched in basic and acidic residues. The segment at His-171–Arg-205 is disordered.

This sequence belongs to the UreE family.

The protein resides in the cytoplasm. Involved in urease metallocenter assembly. Binds nickel. Probably functions as a nickel donor during metallocenter assembly. The polypeptide is Urease accessory protein UreE (Burkholderia pseudomallei (strain K96243)).